A 139-amino-acid polypeptide reads, in one-letter code: uncharacterized protein (139 aa).

Residues 77–97 traverse the membrane as a helical segment; sequence YCFFFFLVLFLNGIIATRGKA.

Its subcellular location is the mitochondrion membrane. This is an uncharacterized protein from Arabidopsis thaliana (Mouse-ear cress).